The primary structure comprises 213 residues: Thymidylate kinase (213 aa).

10-17 contacts ATP; it reads GLEGAGKT.

Belongs to the thymidylate kinase family.

It carries out the reaction dTMP + ATP = dTDP + ADP. In terms of biological role, phosphorylation of dTMP to form dTDP in both de novo and salvage pathways of dTTP synthesis. The sequence is that of Thymidylate kinase from Klebsiella pneumoniae (strain 342).